The following is a 1253-amino-acid chain: Cytoplasmic FMR1-interacting protein 1 (1253 aa).

Serine 583 is subject to Phosphoserine. Residues 724–732 (DKRLRSECK) form an EIF4E-binding region. At threonine 1234 the chain carries Phosphothreonine.

The protein belongs to the CYFIP family. As to quaternary structure, component of the WAVE1 complex composed of ABI2, CYFIP1 or CYFIP2, BRK1, NCKAP1 and WASF1/WAVE1. Within the complex, a heterodimer containing NCKAP1 and CYFIP1 interacts with a heterotrimer formed by WAVE1, ABI2 and BRK1. Component of the CYFIP1-EIF4E-FMR1 complex which is composed of CYFIP, EIF4E and FMR1. Interacts with FMR1 but does not bind to related proteins FXR1 or FXR2. Interaction with EIF4E stimulates FMR1 binding. Component of the WAVE2 complex composed of ABI1, CYFIP1/SRA1, NCKAP1/NAP1 (NCKAP1L/HEM1 in hematopoietic cells) and WASF2/WAVE2. Interacts with the active GTP-bound form of RAC1. Interacts through its C-terminus with the C-terminus of DPYSL2/CRMP2 which is necessary for DPYSL2-induced axon outgrowth. Interacts with NYAP1, NYAP2 and MYO16. Interacts with TMEM108 (via N-terminus); the interaction associates TMEM108 with the WAVE1 complex. As to expression, highly expressed in embryonic and adult developing nervous system.

The protein resides in the cytoplasm. The protein localises to the perinuclear region. Its subcellular location is the cell projection. It is found in the lamellipodium. It localises to the ruffle. The protein resides in the synapse. The protein localises to the synaptosome. Functionally, component of the CYFIP1-EIF4E-FMR1 complex which binds to the mRNA cap and mediates translational repression. In the CYFIP1-EIF4E-FMR1 complex this subunit is an adapter between EIF4E and FMR1. Promotes the translation repression activity of FMR1 in brain probably by mediating its association with EIF4E and mRNA. Regulates formation of membrane ruffles and lamellipodia. Plays a role in axon outgrowth. Binds to F-actin but not to RNA. Part of the WAVE complex that regulates actin filament reorganization via its interaction with the Arp2/3 complex. Actin remodeling activity is regulated by RAC1. Regulator of epithelial morphogenesis. May act as an invasion suppressor in cancers. As component of the WAVE1 complex, required for BDNF-NTRK2 endocytic trafficking and signaling from early endosomes. The polypeptide is Cytoplasmic FMR1-interacting protein 1 (Mus musculus (Mouse)).